A 519-amino-acid polypeptide reads, in one-letter code: MKQKNQHKKKKKRSCAAKPSGDGTTSDGNKKDVEEERKDGEGKREIENVGKNFIESLMEAFCSVSMEEAMAAYKEAGGDLNKAAEILSDLVESGDDPSTSSVASGSSGQETASTSEYGAGSSSSCSEDLTRDRWFKGSKQSRVIAATGMVSSVIAKDYLKPNPVRKEFPMMERSKELCGNGKKAADREKAEQFLSSMLGDDCELSMAVVRDVLCQCGYDVDMALNVLLDMSSSSTDDSLSGKCFGIGVSDSLAESSFDTDTSDCELFWGGDYSQRDYAKALMSSQDPFATTQGIDELGLPQKVLESLFNIRQNPKHESKTTSWRNVAKKMQSLGIDASSSSGEEPHPNTFVKDDSYHELRKGANDQWNVTKSYYQKAAEAYSKGGRAHAAYLSDKGRVASKQAQRADERASQDIFVARNKGIENVVTIDLHGQHVKPAMKLLKLHLLFGSYVPSIQTLRVITGCGASGFGKSKVKQSVVKLLEREGVRYCEENRGTLLIKLDGGSREFSFLDTESDSDE.

The span at M1 to C15 shows a compositional bias: basic residues. 2 disordered regions span residues M1–E47 and E92–D128. A compositionally biased stretch (basic and acidic residues) spans G28 to E47. Low complexity predominate over residues S98–E127. One can recognise a Smr domain in the interval I428–D502.

As to quaternary structure, interacts with PRL1.

The sequence is that of SMR domain-containing protein At5g58720 from Arabidopsis thaliana (Mouse-ear cress).